The chain runs to 101 residues: Nucleoid-associated protein Acid345_1974 (101 aa).

This sequence belongs to the YbaB/EbfC family. In terms of assembly, homodimer.

It localises to the cytoplasm. The protein localises to the nucleoid. Its function is as follows. Binds to DNA and alters its conformation. May be involved in regulation of gene expression, nucleoid organization and DNA protection. This Koribacter versatilis (strain Ellin345) protein is Nucleoid-associated protein Acid345_1974.